Consider the following 260-residue polypeptide: Late transcription factor 1 (260 aa).

The protein belongs to the chordopoxvirinae VLTF-1 family. As to quaternary structure, interacts with the late transcription factors VLTF-2 and VLTF-3. Interacts with the late transcription elongation factor VLTF-4. Interacts with itself.

Functionally, associates with RNA polymerase to initiate transcription from late gene promoters. The chain is Late transcription factor 1 (OPG093) from Vaccinia virus (strain Ankara) (VACV).